The primary structure comprises 309 residues: Ribosomal RNA small subunit methyltransferase H (309 aa).

Residues 33–35 (GGH), aspartate 53, phenylalanine 79, aspartate 100, and glutamine 107 contribute to the S-adenosyl-L-methionine site.

It belongs to the methyltransferase superfamily. RsmH family.

It localises to the cytoplasm. The catalysed reaction is cytidine(1402) in 16S rRNA + S-adenosyl-L-methionine = N(4)-methylcytidine(1402) in 16S rRNA + S-adenosyl-L-homocysteine + H(+). Its function is as follows. Specifically methylates the N4 position of cytidine in position 1402 (C1402) of 16S rRNA. This chain is Ribosomal RNA small subunit methyltransferase H, found in Clostridium botulinum (strain Okra / Type B1).